The following is a 316-amino-acid chain: tRNA dimethylallyltransferase (316 aa).

Gly17–Thr24 contacts ATP. Thr19–Thr24 serves as a coordination point for substrate. Interaction with substrate tRNA stretches follow at residues Asp42–Leu45, Gln166–Arg170, Arg247–Arg252, and Lys280–Arg287.

This sequence belongs to the IPP transferase family. As to quaternary structure, monomer. The cofactor is Mg(2+).

It catalyses the reaction adenosine(37) in tRNA + dimethylallyl diphosphate = N(6)-dimethylallyladenosine(37) in tRNA + diphosphate. Functionally, catalyzes the transfer of a dimethylallyl group onto the adenine at position 37 in tRNAs that read codons beginning with uridine, leading to the formation of N6-(dimethylallyl)adenosine (i(6)A). In Enterobacter sp. (strain 638), this protein is tRNA dimethylallyltransferase.